The sequence spans 250 residues: Ribose-5-phosphate isomerase A (250 aa).

Residues 33–36 (TGST), 89–92 (DGAD), and 102–105 (KGGG) contribute to the substrate site. The active-site Proton acceptor is the Glu-111. Lys-129 contacts substrate.

This sequence belongs to the ribose 5-phosphate isomerase family. In terms of assembly, homodimer.

The enzyme catalyses aldehydo-D-ribose 5-phosphate = D-ribulose 5-phosphate. It participates in carbohydrate degradation; pentose phosphate pathway; D-ribose 5-phosphate from D-ribulose 5-phosphate (non-oxidative stage): step 1/1. In terms of biological role, catalyzes the reversible conversion of ribose-5-phosphate to ribulose 5-phosphate. The protein is Ribose-5-phosphate isomerase A of Cereibacter sphaeroides (strain ATCC 17025 / ATH 2.4.3) (Rhodobacter sphaeroides).